The following is a 138-amino-acid chain: Large ribosomal subunit protein uL16 (138 aa).

Belongs to the universal ribosomal protein uL16 family. As to quaternary structure, part of the 50S ribosomal subunit.

In terms of biological role, binds 23S rRNA and is also seen to make contacts with the A and possibly P site tRNAs. The chain is Large ribosomal subunit protein uL16 from Anaeromyxobacter dehalogenans (strain 2CP-1 / ATCC BAA-258).